Here is a 198-residue protein sequence, read N- to C-terminus: Putative pseudouridine methyltransferase (198 aa).

S-adenosyl-L-methionine-binding residues include leucine 132 and cysteine 186.

It belongs to the methyltransferase superfamily. TrmY family.

It localises to the cytoplasm. This chain is Putative pseudouridine methyltransferase, found in Shewanella frigidimarina (strain NCIMB 400).